A 566-amino-acid polypeptide reads, in one-letter code: Beta-1,2-xylosyltransferease XAX1 (566 aa).

Residues Met-1–Pro-25 are disordered. Residues Met-1–Gly-43 are Cytoplasmic-facing. The helical; Signal-anchor for type II membrane protein transmembrane segment at Leu-44–Ile-64 threads the bilayer. The Lumenal segment spans residues Tyr-65–Gln-566. Residue Asn-74 is glycosylated (N-linked (GlcNAc...) asparagine). Residues Leu-78–Cys-180 are disordered. Residues Pro-84 to Pro-94 show a composition bias toward pro residues. Residues Asn-104, Asn-368, Asn-429, Asn-515, and Asn-549 are each glycosylated (N-linked (GlcNAc...) asparagine).

It belongs to the glycosyltransferase 61 family. Highly expressed in young panicles.

It is found in the golgi apparatus membrane. The protein operates within glycan metabolism. Glycosyltransferase involved in the xylosylation of xylan, the major hemicellulose (non-cellulosic component) of primary and secondary walls of angiosperms. Possesses beta-1,2-xylosyltransferase activity, transferring xylose from UDP-xylose to the xylan backbone. This chain is Beta-1,2-xylosyltransferease XAX1, found in Oryza sativa subsp. japonica (Rice).